Consider the following 427-residue polypeptide: Methylenetetrahydrofolate--tRNA-(uracil-5-)-methyltransferase TrmFO (427 aa).

8 to 13 serves as a coordination point for FAD; sequence GAGISG.

The protein belongs to the MnmG family. TrmFO subfamily. The cofactor is FAD.

Its subcellular location is the cytoplasm. The catalysed reaction is uridine(54) in tRNA + (6R)-5,10-methylene-5,6,7,8-tetrahydrofolate + NADH + H(+) = 5-methyluridine(54) in tRNA + (6S)-5,6,7,8-tetrahydrofolate + NAD(+). It carries out the reaction uridine(54) in tRNA + (6R)-5,10-methylene-5,6,7,8-tetrahydrofolate + NADPH + H(+) = 5-methyluridine(54) in tRNA + (6S)-5,6,7,8-tetrahydrofolate + NADP(+). Its function is as follows. Catalyzes the folate-dependent formation of 5-methyl-uridine at position 54 (M-5-U54) in all tRNAs. The polypeptide is Methylenetetrahydrofolate--tRNA-(uracil-5-)-methyltransferase TrmFO (Mycoplasmopsis agalactiae (strain NCTC 10123 / CIP 59.7 / PG2) (Mycoplasma agalactiae)).